The following is a 285-amino-acid chain: ATP phosphoribosyltransferase (285 aa).

The protein belongs to the ATP phosphoribosyltransferase family. Long subfamily. Mg(2+) is required as a cofactor.

The protein localises to the cytoplasm. It carries out the reaction 1-(5-phospho-beta-D-ribosyl)-ATP + diphosphate = 5-phospho-alpha-D-ribose 1-diphosphate + ATP. The protein operates within amino-acid biosynthesis; L-histidine biosynthesis; L-histidine from 5-phospho-alpha-D-ribose 1-diphosphate: step 1/9. With respect to regulation, feedback inhibited by histidine. In terms of biological role, catalyzes the condensation of ATP and 5-phosphoribose 1-diphosphate to form N'-(5'-phosphoribosyl)-ATP (PR-ATP). Has a crucial role in the pathway because the rate of histidine biosynthesis seems to be controlled primarily by regulation of HisG enzymatic activity. This Metallosphaera sedula (strain ATCC 51363 / DSM 5348 / JCM 9185 / NBRC 15509 / TH2) protein is ATP phosphoribosyltransferase.